The following is a 161-amino-acid chain: Putative 4-hydroxy-4-methyl-2-oxoglutarate aldolase (161 aa).

Substrate-binding positions include 78–81 (GDVI) and Arg100. Asp101 contributes to the a divalent metal cation binding site.

The protein belongs to the class II aldolase/RraA-like family. In terms of assembly, homotrimer. It depends on a divalent metal cation as a cofactor.

It carries out the reaction 4-hydroxy-4-methyl-2-oxoglutarate = 2 pyruvate. It catalyses the reaction oxaloacetate + H(+) = pyruvate + CO2. Its function is as follows. Catalyzes the aldol cleavage of 4-hydroxy-4-methyl-2-oxoglutarate (HMG) into 2 molecules of pyruvate. Also contains a secondary oxaloacetate (OAA) decarboxylase activity due to the common pyruvate enolate transition state formed following C-C bond cleavage in the retro-aldol and decarboxylation reactions. The protein is Putative 4-hydroxy-4-methyl-2-oxoglutarate aldolase of Mycobacterium avium (strain 104).